The sequence spans 220 residues: Cytidylate kinase (220 aa).

Residue 9–17 (GPAASGKST) coordinates ATP.

It belongs to the cytidylate kinase family. Type 1 subfamily.

The protein resides in the cytoplasm. It carries out the reaction CMP + ATP = CDP + ADP. It catalyses the reaction dCMP + ATP = dCDP + ADP. This Thermotoga neapolitana (strain ATCC 49049 / DSM 4359 / NBRC 107923 / NS-E) protein is Cytidylate kinase.